The sequence spans 54 residues: UPF0434 protein BCI_0256 (54 aa).

Belongs to the UPF0434 family.

The protein is UPF0434 protein BCI_0256 of Baumannia cicadellinicola subsp. Homalodisca coagulata.